We begin with the raw amino-acid sequence, 564 residues long: Arginine--tRNA ligase (564 aa).

The short motif at 122–132 (PNIAKPFSIGH) is the 'HIGH' region element.

This sequence belongs to the class-I aminoacyl-tRNA synthetase family. As to quaternary structure, monomer.

Its subcellular location is the cytoplasm. The catalysed reaction is tRNA(Arg) + L-arginine + ATP = L-arginyl-tRNA(Arg) + AMP + diphosphate. This chain is Arginine--tRNA ligase, found in Lactococcus lactis subsp. cremoris (strain MG1363).